Here is an 83-residue protein sequence, read N- to C-terminus: Putative membrane protein insertion efficiency factor (83 aa).

Positions 63–83 (GGNDPVPDHFSLRRNKTDISD) are disordered. Residues 68–83 (VPDHFSLRRNKTDISD) show a composition bias toward basic and acidic residues.

This sequence belongs to the UPF0161 family.

It is found in the cell membrane. Could be involved in insertion of integral membrane proteins into the membrane. This is Putative membrane protein insertion efficiency factor from Streptococcus agalactiae serotype Ia (strain ATCC 27591 / A909 / CDC SS700).